A 428-amino-acid polypeptide reads, in one-letter code: Sporulation kinase B (428 aa).

The Cytoplasmic portion of the chain corresponds to 1 to 6 (MEILKD). Residues 7–27 (YLLHICFILFPILLYQVFWLG) traverse the membrane as a helical segment. Over 28 to 37 (KPAILVPKIN) the chain is Extracellular. The chain crosses the membrane as a helical span at residues 38–58 (SGLVTLFACGASVLCIIFPIH). The Cytoplasmic segment spans residues 59–68 (EMDYIQYGLQ). Residues 69 to 89 (MIPVIICLFYISTASGLTVAA) form a helical membrane-spanning segment. At 90–99 (SVLCFELLFY) the chain is on the extracellular side. Residues 100–120 (EPSAMFVFTLLPFLIIIPILF) traverse the membrane as a helical segment. The Cytoplasmic segment spans residues 121–132 (QKKWPFMSKAKK). The chain crosses the membrane as a helical span at residues 133-153 (LLLSLLISCVEIFLFFASSWI). Residues 154–166 (LSALNILNFQKSG) are Extracellular-facing. A helical membrane pass occupies residues 167–187 (IFVYEAAVSGLFRSSVLLLSI). Residues 188 to 428 (YIIESIAENI…TIKLPADLPH (241 aa)) are Cytoplasmic-facing. The Histidine kinase domain occupies 218–426 (SVAHEVRNPL…TVTIKLPADL (209 aa)). A Phosphohistidine; by autocatalysis modification is found at His221.

Its subcellular location is the cell membrane. The enzyme catalyses ATP + protein L-histidine = ADP + protein N-phospho-L-histidine.. In terms of biological role, phosphorylates the sporulation-regulatory proteins spo0A and spo0F. Spo0F is required for the KinB activity. The sequence is that of Sporulation kinase B (kinB) from Bacillus subtilis (strain 168).